The chain runs to 102 residues: MQKQKIRIRLKGYETNLLLDSCNKIIETATRTNSVTAGPIPLPTRRKIYCVLRSPHVNKDSREHFETRIHKRVIDIYEPNSTTIDSLMKLDLPAGIDIDIKI.

The protein belongs to the universal ribosomal protein uS10 family. In terms of assembly, part of the 30S ribosomal subunit.

The protein resides in the plastid. Its subcellular location is the chloroplast. Involved in the binding of tRNA to the ribosomes. This is Small ribosomal subunit protein uS10c from Guillardia theta (Cryptophyte).